The chain runs to 194 residues: Inosine triphosphate pyrophosphatase (194 aa).

10-15 lines the ITP pocket; sequence TTNLKK. Position 36 (Glu-36) interacts with Mg(2+). ITP-binding positions include Lys-48, 66–67, Lys-83, Lys-166, and 171–172; these read DT and HR.

Belongs to the HAM1 NTPase family. As to quaternary structure, homodimer. Requires Mg(2+) as cofactor. The cofactor is Mn(2+).

It is found in the cytoplasm. Its subcellular location is the nucleus. It carries out the reaction ITP + H2O = IMP + diphosphate + H(+). The enzyme catalyses dITP + H2O = dIMP + diphosphate + H(+). It catalyses the reaction XTP + H2O = XMP + diphosphate + H(+). Functionally, pyrophosphatase that hydrolyzes non-canonical purine nucleotides such as inosine triphosphate (ITP), deoxyinosine triphosphate (dITP) or xanthosine 5'-triphosphate (XTP) to their respective monophosphate derivatives. The enzyme does not distinguish between the deoxy- and ribose forms. Probably excludes non-canonical purines from RNA and DNA precursor pools, thus preventing their incorporation into RNA and DNA and avoiding chromosomal lesions. This Encephalitozoon intestinalis (strain ATCC 50506) (Microsporidian parasite) protein is Inosine triphosphate pyrophosphatase.